The sequence spans 189 residues: UPF0301 protein PSEEN5058 (189 aa).

The protein belongs to the UPF0301 (AlgH) family.

This is UPF0301 protein PSEEN5058 from Pseudomonas entomophila (strain L48).